Consider the following 165-residue polypeptide: Transcription elongation factor GreA (165 aa).

A coiled-coil region spans residues 55–78 (AAKEEQGKQELRVRQLTQLLESAK).

The protein belongs to the GreA/GreB family.

In terms of biological role, necessary for efficient RNA polymerase transcription elongation past template-encoded arresting sites. The arresting sites in DNA have the property of trapping a certain fraction of elongating RNA polymerases that pass through, resulting in locked ternary complexes. Cleavage of the nascent transcript by cleavage factors such as GreA or GreB allows the resumption of elongation from the new 3'terminus. GreA releases sequences of 2 to 3 nucleotides. This chain is Transcription elongation factor GreA, found in Streptomyces coelicolor (strain ATCC BAA-471 / A3(2) / M145).